Consider the following 362-residue polypeptide: Chorismate synthase (362 aa).

Arg-47 lines the NADP(+) pocket. FMN is bound by residues Arg-124–Ser-126, Gly-286, Lys-301–Thr-305, and Arg-327.

Belongs to the chorismate synthase family. Homotetramer. Requires FMNH2 as cofactor.

It carries out the reaction 5-O-(1-carboxyvinyl)-3-phosphoshikimate = chorismate + phosphate. Its pathway is metabolic intermediate biosynthesis; chorismate biosynthesis; chorismate from D-erythrose 4-phosphate and phosphoenolpyruvate: step 7/7. Catalyzes the anti-1,4-elimination of the C-3 phosphate and the C-6 proR hydrogen from 5-enolpyruvylshikimate-3-phosphate (EPSP) to yield chorismate, which is the branch point compound that serves as the starting substrate for the three terminal pathways of aromatic amino acid biosynthesis. This reaction introduces a second double bond into the aromatic ring system. The protein is Chorismate synthase of Prochlorococcus marinus (strain MIT 9303).